The following is a 186-amino-acid chain: piRNA-mediated silencing protein C19orf84 (186 aa).

Disordered regions lie at residues 1–42 (MEQP…NSTD) and 89–186 (SQAG…ETEY). Polar residues predominate over residues 13-22 (NNLSLPSSGT). Residues 24–36 (PWPPAPLPAPPPL) are compositionally biased toward pro residues. Over residues 114–126 (RPGWGRGLHRRGL) the composition is skewed to basic residues. The segment covering 145-157 (RTPPMTLPSPPTL) has biased composition (pro residues).

In terms of assembly, interacts with SPOCD1.

The protein localises to the nucleus. The protein resides in the nucleoplasm. Protein adapter involved in piRNA-directed transposon methylation by connecting PIWIL4-piRNA and DNA methylation machineries. The PIWIL4-piRNA pathway plays a central role during spermatogenesis by directing transposon DNA methylation and silencing, thereby preventing their mobilization, which is essential for the germline integrity. The chain is piRNA-mediated silencing protein C19orf84 from Homo sapiens (Human).